The chain runs to 96 residues: Large ribosomal subunit protein uL23 (96 aa).

It belongs to the universal ribosomal protein uL23 family. As to quaternary structure, part of the 50S ribosomal subunit. Contacts protein L29, and trigger factor when it is bound to the ribosome.

Functionally, one of the early assembly proteins it binds 23S rRNA. One of the proteins that surrounds the polypeptide exit tunnel on the outside of the ribosome. Forms the main docking site for trigger factor binding to the ribosome. This Nitratidesulfovibrio vulgaris (strain ATCC 29579 / DSM 644 / CCUG 34227 / NCIMB 8303 / VKM B-1760 / Hildenborough) (Desulfovibrio vulgaris) protein is Large ribosomal subunit protein uL23.